Consider the following 348-residue polypeptide: Dihydroorotase (348 aa).

The Zn(2+) site is built by H17 and H19. Residues 19-21 (HLR) and N45 each bind substrate. 3 residues coordinate Zn(2+): K103, H140, and H178. K103 carries the post-translational modification N6-carboxylysine. H140 contacts substrate. Residue L223 participates in substrate binding. A Zn(2+)-binding site is contributed by D251. Residue D251 is part of the active site. Substrate-binding residues include H255 and A267.

It belongs to the metallo-dependent hydrolases superfamily. DHOase family. Class II DHOase subfamily. In terms of assembly, homodimer. Zn(2+) serves as cofactor.

It carries out the reaction (S)-dihydroorotate + H2O = N-carbamoyl-L-aspartate + H(+). Its pathway is pyrimidine metabolism; UMP biosynthesis via de novo pathway; (S)-dihydroorotate from bicarbonate: step 3/3. In terms of biological role, catalyzes the reversible cyclization of carbamoyl aspartate to dihydroorotate. The chain is Dihydroorotase from Salmonella agona (strain SL483).